A 278-amino-acid polypeptide reads, in one-letter code: Antiviral protein MAP (278 aa).

A signal peptide spans 1–28; it reads MLTTTKVFFLLLTTWITWYAIVNPQSRA. C64 and C248 are joined by a disulfide. E196 is an active-site residue.

The enzyme catalyses Endohydrolysis of the N-glycosidic bond at one specific adenosine on the 28S rRNA.. Its function is as follows. Inhibits viral infection of plants, and protein synthesis in vitro. This Mirabilis jalapa (Garden four-o'clock) protein is Antiviral protein MAP.